The following is a 303-amino-acid chain: MNNILIITGPTASGKSKISMKIAQDNNGIIVNCDSKQIYREIPIITDQPNLNDTSVEHKLYGYVSVTQQYSVGLWIEDLKDEISSIIQQKKFPVITGGSGMYINSLIYGLSQIPKIEDSVRNETRRLFKTLGKKEFYALLIDKDPIAKCLHKNNSHQLLRAYEVIEQTGISIFVWKENAPREPIFKNFKLCILMPPRSEIYKKINERFINMINTSVIEEIENLLSLNIPAHFPAMKAHGVPEIIQYLQNKISIDQAIEIAQKNTRNYAKRQYTWFKHQFRNALFYESQDQLLESIKNSYVYYN.

9–16 (GPTASGKS) is an ATP binding site. A substrate-binding site is contributed by 11 to 16 (TASGKS). An interaction with substrate tRNA region spans residues 34–37 (DSKQ).

The protein belongs to the IPP transferase family. Monomer. It depends on Mg(2+) as a cofactor.

It catalyses the reaction adenosine(37) in tRNA + dimethylallyl diphosphate = N(6)-dimethylallyladenosine(37) in tRNA + diphosphate. Its function is as follows. Catalyzes the transfer of a dimethylallyl group onto the adenine at position 37 in tRNAs that read codons beginning with uridine, leading to the formation of N6-(dimethylallyl)adenosine (i(6)A). The chain is tRNA dimethylallyltransferase from Ehrlichia chaffeensis (strain ATCC CRL-10679 / Arkansas).